Reading from the N-terminus, the 245-residue chain is Demethylmenaquinone methyltransferase (245 aa).

Residues threonine 62, aspartate 80, 105–106 (DA), and serine 122 contribute to the S-adenosyl-L-methionine site.

Belongs to the class I-like SAM-binding methyltransferase superfamily. MenG/UbiE family.

It catalyses the reaction a 2-demethylmenaquinol + S-adenosyl-L-methionine = a menaquinol + S-adenosyl-L-homocysteine + H(+). Its pathway is quinol/quinone metabolism; menaquinone biosynthesis; menaquinol from 1,4-dihydroxy-2-naphthoate: step 2/2. Its function is as follows. Methyltransferase required for the conversion of demethylmenaquinol (DMKH2) to menaquinol (MKH2). This chain is Demethylmenaquinone methyltransferase, found in Clavibacter sepedonicus (Clavibacter michiganensis subsp. sepedonicus).